A 742-amino-acid polypeptide reads, in one-letter code: Ion-translocating oxidoreductase complex subunit C (742 aa).

4Fe-4S ferredoxin-type domains follow at residues 369 to 397 and 407 to 436; these read GEPQ…QQLY and KATT…VQYF. [4Fe-4S] cluster-binding residues include Cys377, Cys380, Cys383, Cys387, Cys416, Cys419, Cys422, and Cys426. A disordered region spans residues 602-719; sequence KLEQQQANAE…PEEQVDPRKA (118 aa).

The protein belongs to the 4Fe4S bacterial-type ferredoxin family. RnfC subfamily. As to quaternary structure, the complex is composed of six subunits: RsxA, RsxB, RsxC, RsxD, RsxE and RsxG. It depends on [4Fe-4S] cluster as a cofactor.

It is found in the cell inner membrane. In terms of biological role, part of a membrane-bound complex that couples electron transfer with translocation of ions across the membrane. Required to maintain the reduced state of SoxR. The chain is Ion-translocating oxidoreductase complex subunit C from Escherichia coli O6:H1 (strain CFT073 / ATCC 700928 / UPEC).